The sequence spans 147 residues: Orcokinin peptides (147 aa).

An N-terminal signal peptide occupies residues 1–27 (MPRHSVFALSILALSITATVWIPTVQA). 2 consecutive propeptides follow at residues 28-89 (ETNL…ERFG) and 146-147 (FG).

Belongs to the orcokinin family.

Its subcellular location is the secreted. Functionally, myotropic peptides. The protein is Orcokinin peptides of Apis mellifera (Honeybee).